The sequence spans 247 residues: Large ribosomal subunit protein uL30 (247 aa).

Met1 carries the post-translational modification N-acetylmethionine. A run of 4 repeats spans residues 7-17 (KKKVPAVPETL), 18-29 (KKKRRNFAELKI), 30-41 (KRLRKKFAQKML), and 42-53 (RKARRKLIYEKA). The segment at 7 to 53 (KKKVPAVPETLKKKRRNFAELKIKRLRKKFAQKMLRKARRKLIYEKA) is 4 X 12 AA tandem repeats. Thr16 is modified (phosphothreonine). Lys123 is subject to N6-acetyllysine. Lys126 is modified (N6-succinyllysine). The residue at position 138 (Tyr138) is a Phosphotyrosine.

It belongs to the universal ribosomal protein uL30 family. As to quaternary structure, component of the large ribosomal subunit. Homodimer. Interacts with DHX33.

It localises to the cytoplasm. Functionally, component of the large ribosomal subunit. The ribosome is a large ribonucleoprotein complex responsible for the synthesis of proteins in the cell. Binds to G-rich structures in 28S rRNA and in mRNAs. Plays a regulatory role in the translation apparatus; inhibits cell-free translation of mRNAs. The polypeptide is Large ribosomal subunit protein uL30 (RPL7) (Macaca fascicularis (Crab-eating macaque)).